The sequence spans 298 residues: Palmitoyl-protein thioesterase 1 (298 aa).

The first 16 residues, 1-16 (MRYFPLLLCLLAITTA), serve as a signal peptide directing secretion. Residue Asn-20 is glycosylated (N-linked (GlcNAc...) asparagine). Cystine bridges form between Cys-37–Cys-38, Cys-88–Cys-120, and Cys-144–Cys-151. Ser-107 functions as the Nucleophile in the catalytic mechanism. Asp-224 is a catalytic residue. Asn-250 is a glycosylation site (N-linked (GlcNAc...) asparagine). His-280 is a catalytic residue.

Belongs to the palmitoyl-protein thioesterase family.

It carries out the reaction S-hexadecanoyl-L-cysteinyl-[protein] + H2O = L-cysteinyl-[protein] + hexadecanoate + H(+). Removes thioester-linked fatty acyl groups such as palmitate (hexadecanoate) from modified cysteine residues in proteins or peptides. This Caenorhabditis elegans protein is Palmitoyl-protein thioesterase 1 (ppt-1).